A 337-amino-acid chain; its full sequence is 4-hydroxy-2-oxovalerate aldolase (337 aa).

Residues 6–256 enclose the Pyruvate carboxyltransferase domain; the sequence is IRIMDTTLRD…ETGIDLFQIM (251 aa). Substrate is bound at residue 14–15; sequence RD. D15 serves as a coordination point for Mn(2+). H18 (proton acceptor) is an active-site residue. Substrate contacts are provided by S168 and H195. Positions 195 and 197 each coordinate Mn(2+). Y286 contributes to the substrate binding site.

This sequence belongs to the 4-hydroxy-2-oxovalerate aldolase family.

It carries out the reaction (S)-4-hydroxy-2-oxopentanoate = acetaldehyde + pyruvate. The polypeptide is 4-hydroxy-2-oxovalerate aldolase (nahM) (Geobacillus genomosp. 3).